The sequence spans 118 residues: MALQWVWLCLRKSLRNNKLMMCRILIELLKILLDVLDSGDYADGPSDNPGTGIAKEEIVKCIDFLKMLEAGDDDIDKYGFPELLAAHFANCLAVCLKAARESDAMFCCSLEANSSDFN.

The sequence is that of Bovine agnoprotein from Bos taurus (Bovine).